A 175-amino-acid chain; its full sequence is UPF0398 protein SSA_1858 (175 aa).

The protein belongs to the UPF0398 family.

The chain is UPF0398 protein SSA_1858 from Streptococcus sanguinis (strain SK36).